The primary structure comprises 362 residues: Heat-inducible transcription repressor HrcA (362 aa).

Belongs to the HrcA family.

Its function is as follows. Negative regulator of class I heat shock genes (grpE-dnaK-dnaJ and groELS operons). Prevents heat-shock induction of these operons. This Nitrobacter winogradskyi (strain ATCC 25391 / DSM 10237 / CIP 104748 / NCIMB 11846 / Nb-255) protein is Heat-inducible transcription repressor HrcA.